The sequence spans 226 residues: N-(5'-phosphoribosyl)anthranilate isomerase (226 aa).

The protein belongs to the TrpF family.

It catalyses the reaction N-(5-phospho-beta-D-ribosyl)anthranilate = 1-(2-carboxyphenylamino)-1-deoxy-D-ribulose 5-phosphate. The protein operates within amino-acid biosynthesis; L-tryptophan biosynthesis; L-tryptophan from chorismate: step 3/5. The chain is N-(5'-phosphoribosyl)anthranilate isomerase from Synechococcus sp. (strain JA-3-3Ab) (Cyanobacteria bacterium Yellowstone A-Prime).